The sequence spans 437 residues: Type II methyltransferase M.HgiCII (437 aa).

The 428-residue stretch at 4–431 (FRFIDLFAGI…KALPNDHLFE (428 aa)) folds into the SAM-dependent MTase C5-type domain. The active site involves C75.

It belongs to the class I-like SAM-binding methyltransferase superfamily. C5-methyltransferase family.

The catalysed reaction is a 2'-deoxycytidine in DNA + S-adenosyl-L-methionine = a 5-methyl-2'-deoxycytidine in DNA + S-adenosyl-L-homocysteine + H(+). Functionally, a methylase that recognizes the double-stranded sequence 5'-GGWCC-3', methylates C-? on both strands and protects the DNA from cleavage by the HgiCII endonuclease. This chain is Type II methyltransferase M.HgiCII, found in Herpetosiphon aurantiacus (Herpetosiphon giganteus).